The primary structure comprises 553 residues: 5'-nucleotidase (553 aa).

Positions 1–21 (MKQRLIVKTALSAAILATLAG) are cleaved as a signal peptide. The N-palmitoyl cysteine moiety is linked to residue C22. C22 is lipidated: S-diacylglycerol cysteine. The a divalent metal cation site is built by D45, H47, D88, N120, H221, H256, and Q258. Substrate is bound by residues F432 and 501–507 (YNAAGGD).

The protein belongs to the 5'-nucleotidase family. It depends on chloride as a cofactor. Mg(2+) is required as a cofactor.

It is found in the cell outer membrane. The enzyme catalyses a ribonucleoside 5'-phosphate + H2O = a ribonucleoside + phosphate. Its function is as follows. Degradation of extracellular 5'-nucleotides for nutritional needs. The protein is 5'-nucleotidase (nutA) of Vibrio vulnificus (strain CMCP6).